The primary structure comprises 291 residues: Cell division control protein 2 homolog 1 (291 aa).

The region spanning 1–284 (GENVEKIGEG…ARSAVEHEYF (284 aa)) is the Protein kinase domain. ATP is bound by residues 7 to 15 (IGEGTYGVV) and K30. T11 is subject to Phosphothreonine. A Phosphotyrosine modification is found at Y12. The active-site Proton acceptor is the D124. A Phosphothreonine; by CAK modification is found at T158.

This sequence belongs to the protein kinase superfamily. CMGC Ser/Thr protein kinase family. CDC2/CDKX subfamily. Found in most organs including root, young leaf, stem, vegetative meristem and flower bud.

The enzyme catalyses L-seryl-[protein] + ATP = O-phospho-L-seryl-[protein] + ADP + H(+). It carries out the reaction L-threonyl-[protein] + ATP = O-phospho-L-threonyl-[protein] + ADP + H(+). The catalysed reaction is [DNA-directed RNA polymerase] + ATP = phospho-[DNA-directed RNA polymerase] + ADP + H(+). Phosphorylation at Thr-11 or Tyr-12 inactivates the enzyme, while phosphorylation at Thr-158 activates it. Its function is as follows. Plays a key role in the control of the eukaryotic cell cycle. Component of the kinase complex that phosphorylates the repetitive C-terminus of RNA polymerase II. The chain is Cell division control protein 2 homolog 1 (CDC2A) from Medicago sativa (Alfalfa).